A 377-amino-acid chain; its full sequence is Cobalt-precorrin-5B C(1)-methyltransferase (377 aa).

Residues 1 to 21 (MNPVRQPYDLAAPAPNGMRRG) are disordered.

It belongs to the CbiD family.

It catalyses the reaction Co-precorrin-5B + S-adenosyl-L-methionine = Co-precorrin-6A + S-adenosyl-L-homocysteine. Its pathway is cofactor biosynthesis; adenosylcobalamin biosynthesis; cob(II)yrinate a,c-diamide from sirohydrochlorin (anaerobic route): step 6/10. Its function is as follows. Catalyzes the methylation of C-1 in cobalt-precorrin-5B to form cobalt-precorrin-6A. In Chromobacterium violaceum (strain ATCC 12472 / DSM 30191 / JCM 1249 / CCUG 213 / NBRC 12614 / NCIMB 9131 / NCTC 9757 / MK), this protein is Cobalt-precorrin-5B C(1)-methyltransferase.